Here is an 89-residue protein sequence, read N- to C-terminus: Large ribosomal subunit protein bL27 (89 aa).

The disordered stretch occupies residues 1–21; the sequence is MAHKKSGGSSSNGRDSESKRL.

Belongs to the bacterial ribosomal protein bL27 family.

The sequence is that of Large ribosomal subunit protein bL27 from Caulobacter vibrioides (strain NA1000 / CB15N) (Caulobacter crescentus).